The following is a 427-amino-acid chain: Glutamate-1-semialdehyde 2,1-aminomutase (427 aa).

Lysine 264 is subject to N6-(pyridoxal phosphate)lysine.

The protein belongs to the class-III pyridoxal-phosphate-dependent aminotransferase family. HemL subfamily. In terms of assembly, homodimer. Pyridoxal 5'-phosphate is required as a cofactor.

The protein resides in the cytoplasm. It catalyses the reaction (S)-4-amino-5-oxopentanoate = 5-aminolevulinate. The protein operates within porphyrin-containing compound metabolism; protoporphyrin-IX biosynthesis; 5-aminolevulinate from L-glutamyl-tRNA(Glu): step 2/2. In Clostridium botulinum (strain Eklund 17B / Type B), this protein is Glutamate-1-semialdehyde 2,1-aminomutase.